We begin with the raw amino-acid sequence, 404 residues long: Glucose-1-phosphate adenylyltransferase (404 aa).

Residues Tyr-99, Gly-164, 179–180 (EK), and Ser-197 each bind alpha-D-glucose 1-phosphate.

The protein belongs to the bacterial/plant glucose-1-phosphate adenylyltransferase family.

The catalysed reaction is alpha-D-glucose 1-phosphate + ATP + H(+) = ADP-alpha-D-glucose + diphosphate. It participates in glycan biosynthesis; glycogen biosynthesis. Functionally, involved in the biosynthesis of ADP-glucose building block, required in the biosynthesis of maltose-1-phosphate (M1P) and in the elongation reactions to produce linear alpha-1,4-glucans. Catalyzes the reaction between ATP and alpha-D-glucose 1-phosphate (G1P) to produce pyrophosphate and ADP-Glc. The polypeptide is Glucose-1-phosphate adenylyltransferase (Mycolicibacterium smegmatis (strain ATCC 700084 / mc(2)155) (Mycobacterium smegmatis)).